A 557-amino-acid chain; its full sequence is Urocanate hydratase (557 aa).

Residues 53–54 (GG), Q131, 177–179 (GMG), E197, 243–244 (NA), 264–268 (QTSAH), 274–275 (YL), and Y323 each bind NAD(+). The active site involves C411. G493 serves as a coordination point for NAD(+).

Belongs to the urocanase family. The cofactor is NAD(+).

The protein resides in the cytoplasm. It carries out the reaction 4-imidazolone-5-propanoate = trans-urocanate + H2O. It participates in amino-acid degradation; L-histidine degradation into L-glutamate; N-formimidoyl-L-glutamate from L-histidine: step 2/3. In terms of biological role, catalyzes the conversion of urocanate to 4-imidazolone-5-propionate. The polypeptide is Urocanate hydratase (Mesorhizobium japonicum (strain LMG 29417 / CECT 9101 / MAFF 303099) (Mesorhizobium loti (strain MAFF 303099))).